A 323-amino-acid polypeptide reads, in one-letter code: Porphobilinogen deaminase (323 aa).

At C251 the chain carries S-(dipyrrolylmethanemethyl)cysteine.

It belongs to the HMBS family. Monomer. It depends on dipyrromethane as a cofactor.

The catalysed reaction is 4 porphobilinogen + H2O = hydroxymethylbilane + 4 NH4(+). It functions in the pathway porphyrin-containing compound metabolism; protoporphyrin-IX biosynthesis; coproporphyrinogen-III from 5-aminolevulinate: step 2/4. Its pathway is porphyrin-containing compound metabolism; chlorophyll biosynthesis. Tetrapolymerization of the monopyrrole PBG into the hydroxymethylbilane pre-uroporphyrinogen in several discrete steps. The chain is Porphobilinogen deaminase (hemC) from Nostoc sp. (strain PCC 7120 / SAG 25.82 / UTEX 2576).